A 108-amino-acid polypeptide reads, in one-letter code: MGVQVETISSGDGRTFPKRGQTCVVHYTGMLEDGKKFDSSRDRNKPFKFTLGKQEVIRGWEEGVAQMSVGQRAKLIISPDYAYGATGHPGIIPPHATLVFDVELLKLE.

At serine 10 the chain carries Phosphoserine. One can recognise a PPIase FKBP-type domain in the interval 20 to 108 (GQTCVVHYTG…VFDVELLKLE (89 aa)). The residue at position 53 (lysine 53) is an N6-acetyllysine; alternate. Position 53 is an N6-succinyllysine; alternate (lysine 53).

It belongs to the FKBP-type PPIase family. FKBP1 subfamily. Interacts with TGFBR1; prevents TGFBR1 phosphorylation by TGFBR2 and stabilizes it in the inactive conformation. Interacts with ACVR1B and SMAD7. Identified in a complex composed of RYR1, PDE4D, PKA, FKBP1A and protein phosphatase 1 (PP1). Interacts directly with RYR2. Interacts directly with RYR3. Interacts directly with RYR1. Interacts with GLMN; rapamycin and FK506 abolish the interaction with GLMN in a dose dependent manner. In terms of tissue distribution, ubiquitous.

It localises to the cytoplasm. Its subcellular location is the cytosol. It is found in the sarcoplasmic reticulum membrane. It catalyses the reaction [protein]-peptidylproline (omega=180) = [protein]-peptidylproline (omega=0). Its activity is regulated as follows. Inhibited by both FK506 and rapamycin. Its function is as follows. Keeps in an inactive conformation TGFBR1, the TGF-beta type I serine/threonine kinase receptor, preventing TGF-beta receptor activation in absence of ligand. Recruits SMAD7 to ACVR1B which prevents the association of SMAD2 and SMAD3 with the activin receptor complex, thereby blocking the activin signal. May modulate the RYR1 calcium channel activity. PPIases accelerate the folding of proteins. It catalyzes the cis-trans isomerization of proline imidic peptide bonds in oligopeptides. The protein is Peptidyl-prolyl cis-trans isomerase FKBP1A (Fkbp1a) of Rattus norvegicus (Rat).